The following is a 238-amino-acid chain: tRNA (guanine-N(7)-)-methyltransferase (238 aa).

Residues Glu71, Glu96, Asp123, and Asp146 each contribute to the S-adenosyl-L-methionine site. The active site involves Asp146. Substrate-binding positions include Lys150, Asp182, and 217 to 220 (TKFE).

It belongs to the class I-like SAM-binding methyltransferase superfamily. TrmB family.

It carries out the reaction guanosine(46) in tRNA + S-adenosyl-L-methionine = N(7)-methylguanosine(46) in tRNA + S-adenosyl-L-homocysteine. Its pathway is tRNA modification; N(7)-methylguanine-tRNA biosynthesis. Its function is as follows. Catalyzes the formation of N(7)-methylguanine at position 46 (m7G46) in tRNA. This chain is tRNA (guanine-N(7)-)-methyltransferase, found in Methylobacillus flagellatus (strain ATCC 51484 / DSM 6875 / VKM B-1610 / KT).